The following is a 390-amino-acid chain: Guanidine hydrolase (390 aa).

Residues His-174, Asp-199, His-201, Asp-203, Asp-291, and Asp-293 each contribute to the Ni(2+) site.

This sequence belongs to the arginase family. Homohexamer. The cofactor is Ni(2+).

The protein resides in the cytoplasm. It carries out the reaction guanidine + H2O = urea + NH4(+). With respect to regulation, activation of GdmH depends on the presence of the accessory proteins GhaA (Sll1078) and GhaB (Sll1079), which load nickel into the active site. Hydrolase activity is slightly activated in the presence of GTP. It does not require ATP or NAD(P)H. Addition of Ca(2+), Mn(2+), Fe(2+) or Fe(3+) has no consistent effects, whereas addition of Co(2+), Cu(2+) or Zn(2+) inhibits the activity. Its function is as follows. Catalyzes the hydrolysis of guanidine into urea and ammonium. Is highly specific for free guanidine. At pH 8, also catalyzes the release of urea from methylguanidine but with significantly reduced specific activity compared with that for guanidine. Cannot hydrolyze guanidinoacetate, guanidinopropionate, guanidinobutyrate, agmatine, arginine or creatine. Required to use guanidine as the sole nitrogen source for growth. Overexpression of the gene accelerates guanidine degradation and promotes biomass growth. The protein is Guanidine hydrolase of Synechocystis sp. (strain ATCC 27184 / PCC 6803 / Kazusa).